Consider the following 133-residue polypeptide: ATP synthase epsilon chain, chloroplastic (133 aa).

The protein belongs to the ATPase epsilon chain family. F-type ATPases have 2 components, CF(1) - the catalytic core - and CF(0) - the membrane proton channel. CF(1) has five subunits: alpha(3), beta(3), gamma(1), delta(1), epsilon(1). CF(0) has three main subunits: a, b and c.

The protein localises to the plastid. The protein resides in the chloroplast thylakoid membrane. In terms of biological role, produces ATP from ADP in the presence of a proton gradient across the membrane. The chain is ATP synthase epsilon chain, chloroplastic from Solanum lycopersicum (Tomato).